The sequence spans 186 residues: ATP synthase subunit delta (186 aa).

This sequence belongs to the ATPase delta chain family. In terms of assembly, F-type ATPases have 2 components, F(1) - the catalytic core - and F(0) - the membrane proton channel. F(1) has five subunits: alpha(3), beta(3), gamma(1), delta(1), epsilon(1). F(0) has three main subunits: a(1), b(2) and c(10-14). The alpha and beta chains form an alternating ring which encloses part of the gamma chain. F(1) is attached to F(0) by a central stalk formed by the gamma and epsilon chains, while a peripheral stalk is formed by the delta and b chains.

The protein localises to the cell inner membrane. In terms of biological role, f(1)F(0) ATP synthase produces ATP from ADP in the presence of a proton or sodium gradient. F-type ATPases consist of two structural domains, F(1) containing the extramembraneous catalytic core and F(0) containing the membrane proton channel, linked together by a central stalk and a peripheral stalk. During catalysis, ATP synthesis in the catalytic domain of F(1) is coupled via a rotary mechanism of the central stalk subunits to proton translocation. This protein is part of the stalk that links CF(0) to CF(1). It either transmits conformational changes from CF(0) to CF(1) or is implicated in proton conduction. The protein is ATP synthase subunit delta of Wolbachia sp. subsp. Drosophila simulans (strain wRi).